A 309-amino-acid chain; its full sequence is MSGDQHADRSSGEKSNGDQDDTVDAKPDRSSRLSLFAKKKKNGEEEQPKSSLSNQYRIVTPTFQYNMNYKKVGKCIIINNKNFEDKTGMGTRNGTDKDAGDLSKSFRSLGFDVYTYNDRSCEDMQTLLKQAAEENHSDAACFACILLSHGEEGLIYGTDGPMAIKHLTTLFRGDKCKTLIGKPKLFFIQACRGSEFDEGIQTDSGPANDTLETDANPRYKIPVEADFLFAYSTVPGYYSWRNPGRGSWFVQSLCSVLNEHGKQLEIMQILTRVNYVVATNFESQSDDPRFSEKKQIPCVVSMLTKELYF.

The propeptide at M1 to D24 is N-terminally processed. Basic and acidic residues predominate over residues M1–S31. Residues M1–S53 are disordered. An exosite region spans residues K39–N42. Residues K81–R92 are loop L1. Catalysis depends on residues H149 and C191. The interval R192–Q201 is loop L2. Residues S204 to D214 constitute a propeptide that is removed on maturation. The interval V234–G246 is loop L3. Residues E282–I296 form a loop L4 region.

This sequence belongs to the peptidase C14A family. In terms of assembly, heterotetramer that consists of two anti-parallel arranged heterodimers, each one formed by a 20 kDa (p20) and a 11 kDa (p11) subunit. Cleavage by different proteases, such as granzyme B (GZMB), caspase-1 (CASP1), caspase-8 (CASP8) or caspase-9 (CASP9) generate the two active subunits. Its involvement in different programmed cell death processes is probably specified by the protease that activates CASP7. Cleaved and activated by initiator caspases (CASP8 and/or CASP9), leading to execution phase of apoptosis. Cleavage and maturation by GZMB regulates granzyme-mediated programmed cell death. Cleaved and activated by CASP1 in response to bacterial infection.

It is found in the cytoplasm. The protein resides in the cytosol. The protein localises to the nucleus. It localises to the secreted. Its subcellular location is the extracellular space. The catalysed reaction is Strict requirement for an Asp residue at position P1 and has a preferred cleavage sequence of Asp-Glu-Val-Asp-|-.. With respect to regulation, during activation, the N-terminal disordered prodomain is removed by cleavage. Concomitantly, double cleavage gives rise to a large Caspase-7 subunit p20 and a small Caspase-7 subunit p11. The two large and two small subunits then assemble to form the active CASP7 complex. Can be cleaved and activated by different caspases, depending on the context. Cleaved and activated by initiator caspases (CASP8 and/or CASP9), leading to execution phase of apoptosis. Cleavage and maturation by GZMB regulates granzyme-mediated programmed cell death. Cleavage and maturation by CASP1 regulates pyroptosis. Inhibited by BIRC6; following inhibition of BIRC6-caspase binding by DIABLO/SMAC, BIRC6 is subjected to caspase cleavage, leading to an increase in active caspases. Its function is as follows. Thiol protease involved in different programmed cell death processes, such as apoptosis, pyroptosis or granzyme-mediated programmed cell death, by proteolytically cleaving target proteins. Has a marked preference for Asp-Glu-Val-Asp (DEVD) consensus sequences, with some plasticity for alternate non-canonical sequences. Its involvement in the different programmed cell death processes is probably determined by upstream proteases that activate CASP7. Acts as an effector caspase involved in the execution phase of apoptosis: following cleavage and activation by initiator caspases (CASP8 and/or CASP9), mediates execution of apoptosis by catalyzing cleavage of proteins. Compared to CASP3, acts as a minor executioner caspase and cleaves a limited set of target proteins. Acts as a key regulator of the inflammatory response in response to bacterial infection by catalyzing cleavage and activation of the sphingomyelin phosphodiesterase SMPD1 in the extracellular milieu, thereby promoting membrane repair. Cleaves BIRC6 following inhibition of BIRC6-caspase binding by DIABLO/SMAC. This Gallus gallus (Chicken) protein is Caspase-7.